Here is a 93-residue protein sequence, read N- to C-terminus: Large ribosomal subunit protein eL43 (93 aa).

Residues cysteine 39–cysteine 60 form a C4-type zinc finger.

It belongs to the eukaryotic ribosomal protein eL43 family.

In Brassica rapa subsp. rapa (Turnip), this protein is Large ribosomal subunit protein eL43 (RPL37A).